Here is a 308-residue protein sequence, read N- to C-terminus: Protein translocase subunit SecF (308 aa).

The next 6 membrane-spanning stretches (helical) occupy residues 28 to 48 (SIILSLISFIWIGIYKFNFGI), 140 to 160 (IEAGAMAMLFSFLAIMVYIWV), 164 to 184 (WYFGFGILIALVHDVILALGF), 194 to 214 (LSTIAAVLTIIGYSVNDSVVI), 246 to 266 (ILTVITTLLANLALILFGGEA), and 272 to 292 (ILVFFGIIVGTYSSIFISAPI).

This sequence belongs to the SecD/SecF family. SecF subfamily. Forms a complex with SecD. Part of the essential Sec protein translocation apparatus which comprises SecA, SecYEG and auxiliary proteins SecDF-YajC and YidC.

It is found in the cell inner membrane. In terms of biological role, part of the Sec protein translocase complex. Interacts with the SecYEG preprotein conducting channel. SecDF uses the proton motive force (PMF) to complete protein translocation after the ATP-dependent function of SecA. This is Protein translocase subunit SecF from Rickettsia rickettsii (strain Sheila Smith).